A 501-amino-acid chain; its full sequence is Membrane-bound lytic murein transglycosylase F (501 aa).

The N-terminal stretch at 1-29 (MTKILLNTASTVLTRLWKLSLLGLVFAVA) is a signal peptide. Positions 30–274 (AATLVSSRIP…DAMETFYGHL (245 aa)) are non-LT domain. An LT domain region spans residues 275 to 501 (GEIDYSGAIL…VKSISGTSSL (227 aa)). The active site involves Glu321.

The protein in the N-terminal section; belongs to the bacterial solute-binding protein 3 family. In the C-terminal section; belongs to the transglycosylase Slt family.

It localises to the cell outer membrane. It catalyses the reaction Exolytic cleavage of the (1-&gt;4)-beta-glycosidic linkage between N-acetylmuramic acid (MurNAc) and N-acetylglucosamine (GlcNAc) residues in peptidoglycan, from either the reducing or the non-reducing ends of the peptidoglycan chains, with concomitant formation of a 1,6-anhydrobond in the MurNAc residue.. Its function is as follows. Murein-degrading enzyme that degrades murein glycan strands and insoluble, high-molecular weight murein sacculi, with the concomitant formation of a 1,6-anhydromuramoyl product. Lytic transglycosylases (LTs) play an integral role in the metabolism of the peptidoglycan (PG) sacculus. Their lytic action creates space within the PG sacculus to allow for its expansion as well as for the insertion of various structures such as secretion systems and flagella. This Saccharophagus degradans (strain 2-40 / ATCC 43961 / DSM 17024) protein is Membrane-bound lytic murein transglycosylase F.